We begin with the raw amino-acid sequence, 168 residues long: 6,7-dimethyl-8-ribityllumazine synthase (168 aa).

5-amino-6-(D-ribitylamino)uracil contacts are provided by residues Phe-24, Ala-58–Glu-60, and Ala-82–Ile-84. Glu-87–Thr-88 is a binding site for (2S)-2-hydroxy-3-oxobutyl phosphate. His-90 functions as the Proton donor in the catalytic mechanism. Asn-115 provides a ligand contact to 5-amino-6-(D-ribitylamino)uracil. Residue Arg-129 coordinates (2S)-2-hydroxy-3-oxobutyl phosphate.

Belongs to the DMRL synthase family.

It carries out the reaction (2S)-2-hydroxy-3-oxobutyl phosphate + 5-amino-6-(D-ribitylamino)uracil = 6,7-dimethyl-8-(1-D-ribityl)lumazine + phosphate + 2 H2O + H(+). The protein operates within cofactor biosynthesis; riboflavin biosynthesis; riboflavin from 2-hydroxy-3-oxobutyl phosphate and 5-amino-6-(D-ribitylamino)uracil: step 1/2. Functionally, catalyzes the formation of 6,7-dimethyl-8-ribityllumazine by condensation of 5-amino-6-(D-ribitylamino)uracil with 3,4-dihydroxy-2-butanone 4-phosphate. This is the penultimate step in the biosynthesis of riboflavin. This chain is 6,7-dimethyl-8-ribityllumazine synthase, found in Paraburkholderia xenovorans (strain LB400).